Reading from the N-terminus, the 886-residue chain is Methanogenesis regulatory histidine kinase FilI (886 aa).

Helical transmembrane passes span 7–27 (ILAF…TFMC) and 270–290 (VVGI…FLEL). The region spanning 290–344 (LSILMPLATITSSVEAIREQEKGQGSRIPTVGPAELATLAESINEMLDHLESYNQ) is the HAMP domain. The region spanning 349 to 419 (SEKRFRTIVD…EKDAGVLSGE (71 aa)) is the PAS domain. The region spanning 421 to 473 (FVGEVSAHTRAGSSMTFHAVKVPLRDDRGQVTGICGIARDITDIKEAGVELLK) is the PAC domain. The Histidine kinase domain maps to 674–886 (TVSHDLRSPL…TCVLFTLPTP (213 aa)). A Phosphohistidine; by autocatalysis modification is found at His-677.

In terms of processing, autophosphorylated.

The protein resides in the cell membrane. The enzyme catalyses ATP + protein L-histidine = ADP + protein N-phospho-L-histidine.. In terms of biological role, member of the two-component regulatory system FilI/FilRs, which is involved in the regulation of methanogenesis. Autophosphorylates and specifically transfers the phosphoryl group to both FilR1 and FilR2. Functionally, could also catalyze the synthesis of the quorum sensing (QS) signal molecules carboxyl-acyl homoserine lactones (AHLs), which regulate the transition of the cellular morphology from short cells to filaments and of the carbon metabolic flux from biomass formation to methane production. The polypeptide is Methanogenesis regulatory histidine kinase FilI (Methanothrix harundinacea (strain 6Ac) (Methanosaeta harundinacea)).